The following is a 251-amino-acid chain: uncharacterized protein (251 aa).

Residue 36–43 (GKQGTGKT) coordinates ATP. The segment at 230-251 (SDNKTENPSNPSLLTKIDDVTR) is disordered.

Its function is as follows. This protein may be involved in virus assembly. Essential for virus function. This is an uncharacterized protein from Sulfolobus spindle-shape virus 1 (SSV1).